We begin with the raw amino-acid sequence, 405 residues long: NADH-quinone oxidoreductase subunit D (405 aa).

The protein belongs to the complex I 49 kDa subunit family. In terms of assembly, NDH-1 is composed of 14 different subunits. Subunits NuoB, C, D, E, F, and G constitute the peripheral sector of the complex.

It localises to the cell inner membrane. It catalyses the reaction a quinone + NADH + 5 H(+)(in) = a quinol + NAD(+) + 4 H(+)(out). In terms of biological role, NDH-1 shuttles electrons from NADH, via FMN and iron-sulfur (Fe-S) centers, to quinones in the respiratory chain. The immediate electron acceptor for the enzyme in this species is believed to be ubiquinone. Couples the redox reaction to proton translocation (for every two electrons transferred, four hydrogen ions are translocated across the cytoplasmic membrane), and thus conserves the redox energy in a proton gradient. This is NADH-quinone oxidoreductase subunit D from Leptospira borgpetersenii serovar Hardjo-bovis (strain L550).